Reading from the N-terminus, the 646-residue chain is Lipoteichoic acid synthase (646 aa).

Residues 1–7 (MSSQKKK) are Cytoplasmic-facing. A helical membrane pass occupies residues 8–28 (ISLFAFFLLTVITITLKTYFS). Topologically, residues 29–43 (YYVDFSLGVKGLVQN) are extracellular. Residues 44–64 (LILLMNPYSLVALVLSVFLFF) form a helical membrane-spanning segment. The Cytoplasmic portion of the chain corresponds to 65–68 (KGKK). The chain crosses the membrane as a helical span at residues 69-89 (AFWFMFIGGFLLTFLLYANVV). The Extracellular segment spans residues 90–119 (YFRFFSDFLTFSTLNQVGNVESMGGAVSAS). The chain crosses the membrane as a helical span at residues 120–140 (FKWYDFVYFIDTLVYLFILIF). Residues 141–153 (KTKWLDTKAFSKK) lie on the Cytoplasmic side of the membrane. The helical transmembrane segment at 154–174 (FVPVVMAASVALFFLNLAFAE) threads the bilayer. The Extracellular segment spans residues 175–646 (TDRPELLTRT…ETGPKANSKK (472 aa)). Mn(2+) contacts are provided by Glu-255 and Thr-300. Residue Thr-300 is part of the active site. His-416 contributes to the substrate binding site. Residues Asp-475 and His-476 each contribute to the Mn(2+) site. The segment covering 623–638 (NPDFKKVNPSKYKYET) has biased composition (basic and acidic residues). A disordered region spans residues 623 to 646 (NPDFKKVNPSKYKYETGPKANSKK).

Belongs to the LTA synthase family. In terms of processing, proteolytically cleaved.

It is found in the cell membrane. The protein resides in the secreted. It functions in the pathway cell wall biogenesis; lipoteichoic acid biosynthesis. Its function is as follows. Catalyzes the polymerization of lipoteichoic acid (LTA) polyglycerol phosphate, a reaction that presumably uses phosphatidylglycerol (PG) as substrate. Is required for staphylococcal growth and cell division process. The protein is Lipoteichoic acid synthase (ltaS) of Staphylococcus aureus (strain bovine RF122 / ET3-1).